The sequence spans 231 residues: Octanoyl-[acyl-carrier-protein]:protein N-octanoyltransferase LIPT2, mitochondrial (231 aa).

The N-terminal 31 residues, 1–31, are a transit peptide targeting the mitochondrion; it reads MRQPAVRLVRLGRVPYAELLGLQDRWLRRLQ. Residues 41 to 224 enclose the BPL/LPL catalytic domain; that stretch reads GTEAGALLLC…AFKEIYKCTL (184 aa). Substrate contacts are provided by residues 85-92, 154-156, and 167-169; these read RGGLATFH, AIG, and GLA. The active-site Acyl-thioester intermediate is the Cys-185.

The protein belongs to the LipB family.

It localises to the mitochondrion. The enzyme catalyses octanoyl-[ACP] + L-lysyl-[protein] = N(6)-octanoyl-L-lysyl-[protein] + holo-[ACP] + H(+). It participates in protein modification; protein lipoylation via endogenous pathway; protein N(6)-(lipoyl)lysine from octanoyl-[acyl-carrier-protein]: step 1/2. Functionally, catalyzes the transfer of endogenously produced octanoic acid from octanoyl-acyl-carrier-protein (octanoyl-ACP) onto the lipoyl domains of lipoate-dependent enzymes such as the protein H of the glycine cleavage system (GCSH). Lipoyl-ACP can also act as a substrate although octanoyl-ACP is likely to be the physiological substrate. This is Octanoyl-[acyl-carrier-protein]:protein N-octanoyltransferase LIPT2, mitochondrial from Homo sapiens (Human).